A 30-amino-acid polypeptide reads, in one-letter code: Chassatide C3 (30 aa).

Residues 1-30 constitute a cross-link (cyclopeptide (Gly-Asn)); sequence GIPCGESCVWIPCISSALGCSCKNKVCYRN. Cystine bridges form between Cys4–Cys20, Cys8–Cys22, and Cys13–Cys27.

This is a cyclic peptide. As to expression, expressed in fruit, pedicel, stem and root but not in leaf (at protein level).

Probably participates in a plant defense mechanism. This Chassalia chartacea (Chassalia curviflora) protein is Chassatide C3.